A 1051-amino-acid chain; its full sequence is Helicase POLQ-like (1051 aa).

Basic residues predominate over residues 1-10 (MANKHNLCKK). 2 disordered regions span residues 1–28 (MANK…AKRQ) and 61–112 (LFGT…APTD). Composition is skewed to polar residues over residues 64–78 (TQAT…QSGS) and 89–102 (SFPS…NSAS). Over residues 103–112 (KPDEASAPTD) the composition is skewed to basic and acidic residues. The Helicase ATP-binding domain occupies 274-446 (LPAIRQRKNL…FLNADVYTRG (173 aa)). 287-294 (LPTSGGKT) is a binding site for ATP. The short motif at 391-394 (DELH) is the DEAH box element. Residues 497 to 689 (HLAGLISECA…NEAVGLQSLI (193 aa)) form the Helicase C-terminal domain.

The protein belongs to the helicase family. SKI2 subfamily.

It is found in the nucleus. The protein resides in the chromosome. The enzyme catalyses Couples ATP hydrolysis with the unwinding of duplex DNA by translocating in the 3'-5' direction.. It carries out the reaction ATP + H2O = ADP + phosphate + H(+). Single-stranded 3'-5' DNA helicase that plays a key role in homology-driven double-strand break (DSB) repair. Involved in different DSB repair mechanisms that are guided by annealing of extensive stretches of complementary bases at break ends, such as microhomology-mediated end-joining (MMEJ), single-strand annealing (SSA) or synthesis-dependent strand annealing (SDSA). The polypeptide is Helicase POLQ-like (Drosophila melanogaster (Fruit fly)).